Consider the following 159-residue polypeptide: Keratin-associated protein 9-3 (159 aa).

A run of 16 repeats spans residues 8–12 (CCQPT), 13–17 (CCRTT), 32–36 (CCQPS), 37–41 (CCVSS), 46–50 (CCHPT), 51–55 (CCQNT), 56–60 (CCRTT), 61–65 (CCQPI), 70–74 (CCQPS), 75–79 (CCSTP), 80–84 (CCQPT), 85–89 (CCGSS), 129–133 (CCRPA), 134–138 (CCETT), 139–143 (CCRTT), and 153–157 (CCQPS). A 16 X 5 AA repeats of C-C-[RQVSHE]-[SPTN]-[TASPI] region spans residues 8–157 (CCQPTCCRTT…TCVYSCCQPS (150 aa)).

Belongs to the KRTAP type 9 family. In terms of assembly, interacts with hair keratins.

Functionally, in the hair cortex, hair keratin intermediate filaments are embedded in an interfilamentous matrix, consisting of hair keratin-associated proteins (KRTAP), which are essential for the formation of a rigid and resistant hair shaft through their extensive disulfide bond cross-linking with abundant cysteine residues of hair keratins. The matrix proteins include the high-sulfur and high-glycine-tyrosine keratins. This Homo sapiens (Human) protein is Keratin-associated protein 9-3 (KRTAP9-3).